The chain runs to 234 residues: Bradykinin-releasing enzyme KR-E-1 (234 aa).

The 225-residue stretch at 1–225 (VIGGDECNIN…YSDWIQSIIA (225 aa)) folds into the Peptidase S1 domain. 6 cysteine pairs are disulfide-bonded: C7/C139, C26/C42, C74/C232, C118/C186, C150/C165, and C176/C201. N20 is a glycosylation site (N-linked (GlcNAc...) asparagine). Residues H41 and D86 each act as charge relay system in the active site. S180 (charge relay system) is an active-site residue.

The protein belongs to the peptidase S1 family. Snake venom subfamily. As to quaternary structure, monomer. As to expression, expressed by the venom gland.

It is found in the secreted. Its function is as follows. Bradykinin-releasing enzyme. Releases bradykinin from bovine HMW kininogen. Has anticoagulant activity. Increases permeability of capillaries by intradermal injection into rabbits. This is Bradykinin-releasing enzyme KR-E-1 from Gloydius ussuriensis (Ussuri mamushi).